Here is a 132-residue protein sequence, read N- to C-terminus: Fatty acid-binding protein, adipocyte (132 aa).

Cysteine 2 is subject to N-acetylcysteine. The residue at position 13 (serine 13) is a Phosphoserine. Position 20 is a phosphotyrosine; by Tyr-kinases (tyrosine 20). Residues 22 to 32 carry the Nuclear localization signal motif; that stretch reads KEVGVGFATRK. Residue 127–129 participates in a fatty acid binding; it reads RVY.

It belongs to the calycin superfamily. Fatty-acid binding protein (FABP) family. Monomer. Homodimer. Interacts with PPARG.

Its subcellular location is the cytoplasm. It is found in the nucleus. Its function is as follows. Lipid transport protein in adipocytes. Binds both long chain fatty acids and retinoic acid. Delivers long-chain fatty acids and retinoic acid to their cognate receptors in the nucleus. The sequence is that of Fatty acid-binding protein, adipocyte (Fabp4) from Mus musculus (Mouse).